Consider the following 368-residue polypeptide: Histidinol-phosphate aminotransferase (368 aa).

Lysine 224 bears the N6-(pyridoxal phosphate)lysine mark.

Belongs to the class-II pyridoxal-phosphate-dependent aminotransferase family. Histidinol-phosphate aminotransferase subfamily. In terms of assembly, homodimer. It depends on pyridoxal 5'-phosphate as a cofactor.

It carries out the reaction L-histidinol phosphate + 2-oxoglutarate = 3-(imidazol-4-yl)-2-oxopropyl phosphate + L-glutamate. Its pathway is amino-acid biosynthesis; L-histidine biosynthesis; L-histidine from 5-phospho-alpha-D-ribose 1-diphosphate: step 7/9. The polypeptide is Histidinol-phosphate aminotransferase (Agrobacterium fabrum (strain C58 / ATCC 33970) (Agrobacterium tumefaciens (strain C58))).